Here is a 489-residue protein sequence, read N- to C-terminus: Zinc finger protein 772 (489 aa).

The KRAB domain maps to Val-27–Ala-98. 10 C2H2-type zinc fingers span residues Tyr-144–His-166, Tyr-172–His-194, Tyr-266–His-288, Tyr-294–His-316, Tyr-322–His-344, Tyr-350–His-372, Tyr-378–His-400, Tyr-406–His-428, Tyr-434–His-456, and Tyr-462–His-484.

Belongs to the krueppel C2H2-type zinc-finger protein family.

The protein localises to the nucleus. In terms of biological role, may be involved in transcriptional regulation. This Homo sapiens (Human) protein is Zinc finger protein 772 (ZNF772).